A 267-amino-acid polypeptide reads, in one-letter code: Glutamate racemase (267 aa).

Residues 13-14 (DS) and 45-46 (YS) contribute to the substrate site. Cys77 serves as the catalytic Proton donor/acceptor. Substrate is bound at residue 78–79 (NT). Cys188 (proton donor/acceptor) is an active-site residue. Residue 189–190 (TH) coordinates substrate.

It belongs to the aspartate/glutamate racemases family.

It carries out the reaction L-glutamate = D-glutamate. It participates in cell wall biogenesis; peptidoglycan biosynthesis. In terms of biological role, provides the (R)-glutamate required for cell wall biosynthesis. This Histophilus somni (strain 2336) (Haemophilus somnus) protein is Glutamate racemase.